A 310-amino-acid chain; its full sequence is Uracil phosphoribosyltransferase homolog (310 aa).

2 disordered regions span residues methionine 1–glutamate 27 and serine 62–aspartate 89. Polar residues predominate over residues arginine 16–serine 25. The residue at position 25 (serine 25) is a Phosphoserine. Residues arginine 134, arginine 143, and glutamate 177 to asparagine 180 contribute to the GTP site. Arginine 187 contacts 5-phospho-alpha-D-ribose 1-diphosphate. Residues arginine 204 and arginine 233 each contribute to the GTP site. Residue tyrosine 239–threonine 247 participates in 5-phospho-alpha-D-ribose 1-diphosphate binding. Threonine 300–phenylalanine 302 serves as a coordination point for uracil.

It belongs to the UPRTase family.

It localises to the cytoplasm. The protein localises to the nucleus. The sequence is that of Uracil phosphoribosyltransferase homolog (Uprt) from Mus musculus (Mouse).